The chain runs to 66 residues: Large ribosomal subunit protein bL35 (66 aa).

It belongs to the bacterial ribosomal protein bL35 family.

This Ruegeria pomeroyi (strain ATCC 700808 / DSM 15171 / DSS-3) (Silicibacter pomeroyi) protein is Large ribosomal subunit protein bL35.